A 120-amino-acid chain; its full sequence is Glycine cleavage system H protein (120 aa).

A Lipoyl-binding domain is found at 17–99 (IATVGITSHA…QGAGWLYRMR (83 aa)). Lys-58 is subject to N6-lipoyllysine.

It belongs to the GcvH family. In terms of assembly, the glycine cleavage system is composed of four proteins: P, T, L and H. It depends on (R)-lipoate as a cofactor.

Functionally, the glycine cleavage system catalyzes the degradation of glycine. The H protein shuttles the methylamine group of glycine from the P protein to the T protein. The chain is Glycine cleavage system H protein from Methylobacterium nodulans (strain LMG 21967 / CNCM I-2342 / ORS 2060).